Reading from the N-terminus, the 1243-residue chain is Serine/threonine-protein kinase WNK4 (1243 aa).

Polar residues predominate over residues 1–17 (MLASPATETTVLMSQTE). Residues 1 to 142 (MLASPATETT…GPGSREPLRV (142 aa)) form a disordered region. The segment covering 65 to 77 (VDLGLLSSWSLPA) has biased composition (low complexity). Residues 78–103 (SPAPDPPDPPDSAGPGPARSPPPSSK) are compositionally biased toward pro residues. Ser-97 carries the phosphoserine modification. Basic and acidic residues predominate over residues 118-127 (AAEDSARPEL). Residues Lys-157 and Lys-175 each participate in a glycyl lysine isopeptide (Lys-Gly) (interchain with G-Cter in ubiquitin) cross-link. The region spanning 174–432 (LKFDIEIGRG…IQDLLAHAFF (259 aa)) is the Protein kinase domain. Ser-184 contacts ATP. Residues Lys-186, Lys-226, and Lys-241 each participate in a glycyl lysine isopeptide (Lys-Gly) (interchain with G-Cter in ubiquitin) cross-link. Residues 254-257 (TELM) and Lys-304 contribute to the ATP site. Asp-321 functions as the Proton acceptor in the catalytic mechanism. A Glycyl lysine isopeptide (Lys-Gly) (interchain with G-Cter in ubiquitin) cross-link involves residue Lys-328. Residues Ser-331 and Ser-335 each carry the phosphoserine; by autocatalysis modification. Residues Lys-387, Lys-393, Lys-450, and Lys-454 each participate in a glycyl lysine isopeptide (Lys-Gly) (interchain with G-Cter in ubiquitin) cross-link. The segment at 526 to 564 (KARELEALPPEPGPPPATVPMAPGPPSVFPPEPEEPEAD) is disordered. The segment covering 534–556 (PPEPGPPPATVPMAPGPPSVFPP) has biased composition (pro residues). The tract at residues 557-567 (EPEEPEADQHQ) is interaction with KLHL3. Ser-575 bears the Phosphoserine mark. Low complexity predominate over residues 630 to 641 (SGPGSDFSPGDS). 3 disordered regions span residues 630-683 (SGPG…SVSD), 751-871 (DTGP…STPE), and 943-1110 (SPSP…SPVW). The span at 663 to 676 (PPGRNLRRRPRSRL) shows a compositional bias: basic residues. The span at 767–780 (EPAPLPALPVPLPD) shows a compositional bias: pro residues. Low complexity predominate over residues 797-812 (WTAFSTSSSSPGTPLS). A compositionally biased stretch (pro residues) spans 822–843 (PISPGPIFPITSPPCHPSPSPF). 3 stretches are compositionally biased toward low complexity: residues 844–854 (SPISSQVSSNP), 862–871 (PLPFSSSTPE), and 943–952 (SPSPGLLSQS). The span at 953–970 (PPAPPSPLPSLPLPPPVA) shows a compositional bias: pro residues. A Glycyl lysine isopeptide (Lys-Gly) (interchain with G-Cter in ubiquitin) cross-link involves residue Lys-1010. The RFXV motif motif lies at 1016–1019 (RFQV). Position 1035 is a phosphoserine (Ser-1035). The span at 1065–1077 (ETREALAESDRAA) shows a compositional bias: basic and acidic residues. Residues Lys-1144, Lys-1157, and Lys-1158 each participate in a glycyl lysine isopeptide (Lys-Gly) (interchain with G-Cter in ubiquitin) cross-link. The interval 1166-1243 (RLGKQPPPGI…VTFAGDVGRM (78 aa)) is disordered. 2 stretches are compositionally biased toward polar residues: residues 1193 to 1204 (SFPTSRRNSLQR) and 1216 to 1228 (NSLS…SQEQ). Phosphoserine is present on Ser-1217.

The protein belongs to the protein kinase superfamily. Ser/Thr protein kinase family. WNK subfamily. Interacts with the C-terminal region of KCNJ1. It depends on Mg(2+) as a cofactor. Post-translationally, autophosphorylated at Ser-331 and Ser-335, promoting its activation. Phosphorylated by WNK1 and WNK3. Phosphorylated at Ser-575 in a MAP3K15/ASK3-dependent process in response to osmotic stress or hypotonic low-chloride stimulation. In terms of processing, ubiquitinated by the BCR(KLHL3) complex, leading to its degradation. Also ubiquitinated by the BCR(KLHL2) complex. As to expression, expressed in kidney, colon and skin.

The protein resides in the cell junction. It is found in the tight junction. The catalysed reaction is L-seryl-[protein] + ATP = O-phospho-L-seryl-[protein] + ADP + H(+). It carries out the reaction L-threonyl-[protein] + ATP = O-phospho-L-threonyl-[protein] + ADP + H(+). With respect to regulation, activation requires autophosphorylation of Ser-331 and Ser-335. Autophosphorylation and subsequent activation is inhibited by increases in intracellular ionic strength: Cl(-) potently inhibits WNK4 kinase activity via direct binding. Also inhibited by K(+) ions. Its function is as follows. Serine/threonine-protein kinase component of the WNK4-SPAK/OSR1 kinase cascade, which acts as a key regulator of ion transport in the distal nephron and blood pressure. The WNK4-SPAK/OSR1 kinase cascade is composed of WNK4, which mediates phosphorylation and activation of downstream kinases OXSR1/OSR1 and STK39/SPAK. Following activation, OXSR1/OSR1 and STK39/SPAK catalyze phosphorylation of ion cotransporters, such as SLC12A1/NKCC2, SLC12A2/NKCC1, SLC12A3/NCC, SLC12A5/KCC2 or SLC12A6/KCC3, regulating their activity. Acts as a molecular switch that regulates the balance between renal salt reabsorption and K(+) secretion by modulating the activities of renal transporters and channels, including the Na-Cl cotransporter SLC12A3/NCC and the K(+) channel, KCNJ1/ROMK. Regulates NaCl reabsorption in the distal nephron by activating the thiazide-sensitive Na-Cl cotransporter SLC12A3/NCC in distal convoluted tubule cells of kidney: activates SLC12A3/NCC in a OXSR1/OSR1- and STK39/SPAK-dependent process. Also acts as a scaffold protein independently of its protein kinase activity: negatively regulates cell membrane localization of various transporters and channels (CFTR, KCNJ1/ROMK, SLC4A4, SLC26A9 and TRPV4) by clathrin-dependent endocytosis. Also inhibits the activity of the epithelial Na(+) channel (ENaC) SCNN1A, SCNN1B, SCNN1D in a inase-independent mechanism. May also phosphorylate NEDD4L. The protein is Serine/threonine-protein kinase WNK4 of Homo sapiens (Human).